Reading from the N-terminus, the 489-residue chain is N-succinylglutamate 5-semialdehyde dehydrogenase (489 aa).

An NAD(+)-binding site is contributed by 223-228; that stretch reads GSSRTG. Active-site residues include E246 and C280.

It belongs to the aldehyde dehydrogenase family. AstD subfamily.

The enzyme catalyses N-succinyl-L-glutamate 5-semialdehyde + NAD(+) + H2O = N-succinyl-L-glutamate + NADH + 2 H(+). Its pathway is amino-acid degradation; L-arginine degradation via AST pathway; L-glutamate and succinate from L-arginine: step 4/5. Functionally, catalyzes the NAD-dependent reduction of succinylglutamate semialdehyde into succinylglutamate. This chain is N-succinylglutamate 5-semialdehyde dehydrogenase, found in Aeromonas salmonicida (strain A449).